We begin with the raw amino-acid sequence, 928 residues long: DNA polymerase I (928 aa).

One can recognise a 5'-3' exonuclease domain in the interval 1–323 (MVQIPQNPLI…ADEAPEVTAT (323 aa)). Residues 324 to 517 (VISYDNYVTI…LHLKMWPDLQ (194 aa)) enclose the 3'-5' exonuclease domain. The interval 324 to 928 (VISYDNYVTI…GSGENWDQAH (605 aa)) is klenow fragment. The segment at 521-928 (GPLNVFENIE…GSGENWDQAH (408 aa)) is polymerase.

This sequence belongs to the DNA polymerase type-A family. Single-chain monomer with multiple functions.

The enzyme catalyses DNA(n) + a 2'-deoxyribonucleoside 5'-triphosphate = DNA(n+1) + diphosphate. In addition to polymerase activity, this DNA polymerase exhibits 3'-5' and 5'-3' exonuclease activity. It is able to utilize nicked circular duplex DNA as a template and can unwind the parental DNA strand from its template. Its function is as follows. Genetic interactions among priB, dam, lexA, nagC, polA, rdgB, rdgB, rep and uup link the PriA-PriB replication restart pathway to DNA double-strand break repair. This chain is DNA polymerase I (polA), found in Escherichia coli (strain K12).